We begin with the raw amino-acid sequence, 699 residues long: Elongation factor G (699 aa).

The 281-residue stretch at 8–288 (EDYRNFGIMA…AVVDYLPSPL (281 aa)) folds into the tr-type G domain. GTP contacts are provided by residues 17 to 24 (AHIDAGKT), 86 to 90 (DTPGH), and 140 to 143 (NKMD).

The protein belongs to the TRAFAC class translation factor GTPase superfamily. Classic translation factor GTPase family. EF-G/EF-2 subfamily.

Its subcellular location is the cytoplasm. In terms of biological role, catalyzes the GTP-dependent ribosomal translocation step during translation elongation. During this step, the ribosome changes from the pre-translocational (PRE) to the post-translocational (POST) state as the newly formed A-site-bound peptidyl-tRNA and P-site-bound deacylated tRNA move to the P and E sites, respectively. Catalyzes the coordinated movement of the two tRNA molecules, the mRNA and conformational changes in the ribosome. This Rhizobium rhizogenes (strain K84 / ATCC BAA-868) (Agrobacterium radiobacter) protein is Elongation factor G.